Consider the following 172-residue polypeptide: Glutamyl-tRNA(Gln) amidotransferase subunit C-3, mitochondrial (172 aa).

The segment at 49-71 (KHPSKVPQRPNKSTIDGQSTPTR) is disordered. Residues 58-71 (PNKSTIDGQSTPTR) are compositionally biased toward polar residues.

It belongs to the GatC family. In terms of assembly, subunit of the heterotrimeric GatCAB amidotransferase (AdT) complex, composed of A, B and C subunits.

The protein localises to the mitochondrion. The enzyme catalyses L-glutamyl-tRNA(Gln) + L-glutamine + ATP + H2O = L-glutaminyl-tRNA(Gln) + L-glutamate + ADP + phosphate + H(+). Its function is as follows. Allows the formation of correctly charged Gln-tRNA(Gln) through the transamidation of misacylated Glu-tRNA(Gln) in the mitochondria. The reaction takes place in the presence of glutamine and ATP through an activated gamma-phospho-Glu-tRNA(Gln). The sequence is that of Glutamyl-tRNA(Gln) amidotransferase subunit C-3, mitochondrial from Culex quinquefasciatus (Southern house mosquito).